We begin with the raw amino-acid sequence, 362 residues long: 3-isopropylmalate dehydrogenase (362 aa).

77 to 88 (GPKWGTGAVRPE) is a binding site for NAD(+). The substrate site is built by Arg95, Arg105, Arg134, and Asp223. Positions 223, 248, and 252 each coordinate Mg(2+). Position 287–298 (287–298 (GSAPDLPKGKVN)) interacts with NAD(+).

It belongs to the isocitrate and isopropylmalate dehydrogenases family. Homodimer. The cofactor is Mg(2+). Requires Mn(2+) as cofactor.

Its subcellular location is the cytoplasm. The catalysed reaction is (2R,3S)-3-isopropylmalate + NAD(+) = 4-methyl-2-oxopentanoate + CO2 + NADH. Its pathway is amino-acid biosynthesis; L-leucine biosynthesis; L-leucine from 3-methyl-2-oxobutanoate: step 3/4. Functionally, catalyzes the oxidation of 3-carboxy-2-hydroxy-4-methylpentanoate (3-isopropylmalate) to 3-carboxy-4-methyl-2-oxopentanoate. The product decarboxylates to 4-methyl-2 oxopentanoate. This Zygosaccharomyces bailii protein is 3-isopropylmalate dehydrogenase (LEU2).